The primary structure comprises 220 residues: Elongation factor Ts, chloroplastic (220 aa).

The protein belongs to the EF-Ts family.

Its subcellular location is the plastid. The protein localises to the chloroplast. Associates with the EF-Tu.GDP complex and induces the exchange of GDP to GTP. It remains bound to the aminoacyl-tRNA.EF-Tu.GTP complex up to the GTP hydrolysis stage on the ribosome. The chain is Elongation factor Ts, chloroplastic (tsf) from Porphyra purpurea (Red seaweed).